The primary structure comprises 92 residues: MARSIKKGPFVDDHLMKKVEAQDGSEKKQVIKTWSRRSTIFPNFIGHTFAVYDGRKHVPVYVTEDMVGHKLGEFAPTRTFKGHAADDKKTRR.

The protein belongs to the universal ribosomal protein uS19 family.

Functionally, protein S19 forms a complex with S13 that binds strongly to the 16S ribosomal RNA. The polypeptide is Small ribosomal subunit protein uS19 (Staphylococcus epidermidis (strain ATCC 35984 / DSM 28319 / BCRC 17069 / CCUG 31568 / BM 3577 / RP62A)).